Consider the following 197-residue polypeptide: uncharacterized protein (197 aa).

6 consecutive transmembrane segments (helical) span residues 11–31 (AAMV…IPLI), 50–70 (ILAI…AYLG), 79–99 (AIVA…GLFA), 108–128 (AIVA…LGIM), 136–156 (ALKG…FIGL), and 158–178 (TLQI…AFHF).

The protein belongs to the chromate ion transporter (CHR) (TC 2.A.51) family.

The protein localises to the cell membrane. This is an uncharacterized protein from Bacillus subtilis (strain 168).